The following is a 96-amino-acid chain: Protein Vpr (96 aa).

The segment at M1 to L42 is homooligomerization. 3 positions are modified to phosphoserine; by host: S79, S94, and S96.

This sequence belongs to the HIV-1 VPR protein family. Homooligomer, may form homodimer. Interacts with p6-gag region of the Pr55 Gag precursor protein through a (Leu-X-X)4 motif near the C-terminus of the P6gag protein. Interacts with host UNG. May interact with host RAD23A/HHR23A. Interacts with host VPRBP/DCAF1, leading to hijack the CUL4A-RBX1-DDB1-DCAF1/VPRBP complex, mediating ubiquitination of host proteins such as TERT and ZGPAT and arrest of the cell cycle in G2 phase. Post-translationally, phosphorylated on several residues by host. These phosphorylations regulate VPR activity for the nuclear import of the HIV-1 pre-integration complex.

The protein localises to the virion. Its subcellular location is the host nucleus. It localises to the host extracellular space. Functionally, during virus replication, may deplete host UNG protein, and incude G2-M cell cycle arrest. Acts by targeting specific host proteins for degradation by the 26S proteasome, through association with the cellular CUL4A-DDB1 E3 ligase complex by direct interaction with host VPRPB/DCAF-1. Cell cycle arrest reportedly occurs within hours of infection and is not blocked by antiviral agents, suggesting that it is initiated by the VPR carried into the virion. Additionally, VPR induces apoptosis in a cell cycle dependent manner suggesting that these two effects are mechanistically linked. Detected in the serum and cerebrospinal fluid of AIDS patient, VPR may also induce cell death to bystander cells. Its function is as follows. During virus entry, plays a role in the transport of the viral pre-integration (PIC) complex to the host nucleus. This function is crucial for viral infection of non-dividing macrophages. May act directly at the nuclear pore complex, by binding nucleoporins phenylalanine-glycine (FG)-repeat regions. The protein is Protein Vpr of Human immunodeficiency virus type 1 group M subtype F1 (isolate VI850) (HIV-1).